A 248-amino-acid chain; its full sequence is tRNA (guanine-N(1)-)-methyltransferase (248 aa).

Residues glycine 113 and isoleucine 133–leucine 138 contribute to the S-adenosyl-L-methionine site.

The protein belongs to the RNA methyltransferase TrmD family. In terms of assembly, homodimer.

The protein localises to the cytoplasm. The catalysed reaction is guanosine(37) in tRNA + S-adenosyl-L-methionine = N(1)-methylguanosine(37) in tRNA + S-adenosyl-L-homocysteine + H(+). Specifically methylates guanosine-37 in various tRNAs. The sequence is that of tRNA (guanine-N(1)-)-methyltransferase from Dehalococcoides mccartyi (strain ATCC BAA-2266 / KCTC 15142 / 195) (Dehalococcoides ethenogenes (strain 195)).